Here is a 314-residue protein sequence, read N- to C-terminus: MGEGGYQQINKTLNACAFDDYLATQHARLPPLPDVEQISPRVVRVLGQNAGKFTLQGTNTYIVGTGSRRLIIDTAQGYRAWADLIESTLAQRSIRLSHVFLTHWHGDHTKGVPDLIRMDPDLAEGIYKNSPDHGQRPIEDGQVFRVEGATLRAVHAPGHSHDHMCFVLEEENALFTGDNVLGHGTSAVEDLGLYMTTLRKLQAQECAVGYPAHGAVIPNLPGKITNELAQKTRREKQCLVALDRIRNDQGRLASLTVSELIDVVHGTQLDEQVRKMALEPFMDEVLRKLAEDGHVAFRVRKGVKTWFALNTVRS.

Zn(2+) contacts are provided by H103, H105, D107, and H108. Residue D107 is the Proton donor/acceptor of the active site.

It belongs to the metallo-beta-lactamase superfamily. Zn(2+) is required as a cofactor.

It carries out the reaction atrochrysone carboxyl-[ACP] + H2O = atrochrysone carboxylate + holo-[ACP] + H(+). It functions in the pathway secondary metabolite biosynthesis. Its function is as follows. Atrochrysone carboxyl ACP thioesterase; part of the gene cluster that mediates the biosynthesis of agnestins, dihydroxy-xanthone metabolites. The pathway begins with the assembly and cyclization of atrochrysone thioester by the non-reducing polyketide synthase Agnpks1. The atrochrysone carboxyl ACP thioesterase AgnL7 then breaks the thioester bond and releases the atrochrysone carboxylic acid as the first enzyme-free intermediate. The decarboxylase AgnL1 then catalyzes the concerted decarboxylation-elimination required to convert atochrysone carboxylic acid into emodin anthrone, which is further oxidized to emodin by the anthrone oxygenase AgnL2. Emodin then undergoes reduction catalyzed by the oxidoreductase AgnL4 to yield the dihydroquinone tautomer which is the substrate for reduction by the short chain dehydrogenase AgnL6 reduction to produce hydroxyketone, followed by AgnL8 dehydration and likely spontaneous autoxidation to chrysophanol. Baeyer-Villiger oxidation by the oxidase AgnL3 leads to monodictyphenone via cleavage of the C-10/C-10a bond of chrysophanol. Alternative cleavage at the C-4a/C-10 bond of chrysophanol also leads to the formation some cephalone F. Further conversion to agnestins A and B, requires reduction to dihydro-monodictyphenone, oxidation to agnestin C probably via an epoxide, and rearrangement to either agnestin A or agnestin B directly, although agnestin A or agnestin B can also interconvert. Within the cluster, AgnR1 is the only unassigned oxidoreductase present which could be involved in this conversion. However, AgnR1 seems not to be involved in this step, and thus genes involved in the proposed oxidation/reduction may be located elsewhere on the genome. Further agnestin A derivatives are probably formed by spontaneous decarboxylations, dehydrations and methanolysis reactions. The sequence is that of Atrochrysone carboxyl ACP thioesterase AgnL7 from Paecilomyces divaricatus (Penicillium divaricatum).